Reading from the N-terminus, the 1939-residue chain is MSSDQEMAIFGEAAPYLRKSEKERIEAQNRPFDAKTSVFVAEPKESFVKGTVQSREGGKVTVKTEAGATLTVKEDQVFPMNPPKYDKIEDMAMMTHLHEPAVLYNLKERYAAWMIYTYSGLFCVTVNPYKWLPVYNAEVVTAYRGKKRQEAPPHIFSISDNAYQFMLTDRENQSILITGESGAGKTVNTKRVIQYFATIAVTGDKKKEEVTSGKIQGTLEDQIISANPLLEAFGNAKTVRNDNSSRFGKFIRIHFGTTGKLASADIETYLLEKSRVTFQLKAERSYHIFYQIMSNKKPDLIEMLLITTNPYDYAFVSQGEITVPSIDDQEELIATDSAIDILGFTSDERVSIYKLTGAVMHYGNMKFKQKQREEQAEPDGTEVADKAAYLQSLNSADLLKALCYPRVKVGNEFVTKGQTVQQVYNAVGALAKAVYEKMFLWMVTRINQQLDTKQPRQYFIGVLDIAGFEIFDFNSLEQLCINFTNEKLQQFFNHHMFVLEQEEYKKEGIEWEFIDFGMDLAACIELIEKPMGIFSILEEECMFPKATDTSFKNKLYEQHLGKSNNFQKPKPAKGKVEAHFSLIHYAGTVDYNIGGWLDKNKDPLNETVVGLYQKSAMKTLANLFSGATAAEAEAGGGKKGGKKKGSSFQTVSALFRENLNKLMTNLRSTHPHFVRCIIPNETKTPGAMEHELVLHQLRCNGVLEGIRICRKGFPSRILYADFKQRYKVLNASAIPEGQFIDSKKASEKLLGSIDVDHTQYKFGHTKVFFKAGLLGLLEEMRDDKLAQLITRTQARCRGFLARVEYQKMVERRESIFCIQYNIRAFMNVKHWPWMKLYFKIKPLLKSAETEKEMANMKEEFEKTKESLAKAEAKRKELEEKMVALMQEKNDLQLQVQAEADSLADAEERCDQLIKTKIQLEAKIKEVTERAEDEEEINAELTAKKRKLEDECSELKKDIDDLELTLAKVEKEKHATENKVKNLTEEMAGLDETIAKLTKEKKALQEAHQQTLDDLQAEEDKVNTLTKAKIKLEQQVDDLEGSLEQEKKIRMDLERAKRKLEGDLKLAQESTMDIENDKQQLDEKLKKKEFEMSNLQSKIEDEQALAMQLQKKIKELQARIEELEEEIEAERASRAKAEKQRSDLSRELEEISERLEEAGGATSAQIEMNKKREAEFQKMRRDLEEATLQHEATAATLRKKHADSVAELGEQIDNLQRVKQKLEKEKSEMKMEIDDLASNMETVSKAKGNLEKMCRTLEDQVSELKTKEEEQQRLINDLTAQRARLQTESGEYSRQLDEKDSLVSQLSRGKLAFTQQIEELKRQLEEEIKAKSALAHALQSARHDCDLLREQYEEEQEGKAELQRAMSKANSEVAQWRTKYETDAIQRTEELEEAKKKLAQRLQDAEEHVEAVNAKCASLEKTKQRLQNEVEDLMIDVERTNAACAALDKKQRNFDKILAEWKQKYEETHAELEASQKESRSLSTELFKIKNAYEESLDQLETLKRENKNLQQEISDLTEQIAEGGKRIHELEKIKKQVEQEKTELQAALEEAEASLEHEEGKILRIQLELNQVKSEIDRKIAEKDEEIDQLKRNHIRVVESMQSTLDAEIRSRNDAIRLKKKMEGDLNEMEIQLNHANRMAAEALRNYRNTQGILKDTQIHLDDALRGQEDLKEQLAMVERRANLLQAEIEELRATLEQTERSRKIAEQELLDASERVQLLHTQNTSLINTKKKLETDISQIQGEMEDIIQEARNAEEKAKKAITDAAMMAEELKKEQDTSAHLERMKKNMEQTVKDLQHRLDEAEQLALKGGKKQIQKLEARVRELEGEVESEQKHNIETVKSLRKHERRVKELTYQTEEDRKNVLRLQDLVDKLQAKVKAYKRQAEEAEEQSNVNLSKFRKLQHELEEAEERADIAESQVNKLRVKSREVHTKIISEE.

The 50-residue stretch at 33–82 (DAKTSVFVAEPKESFVKGTVQSREGGKVTVKTEAGATLTVKEDQVFPMNP) folds into the Myosin N-terminal SH3-like domain. 2 positions are modified to phosphothreonine: Thr64 and Thr69. The Myosin motor domain maps to 86–782 (DKIEDMAMMT…LLGLLEEMRD (697 aa)). Lys130 is subject to N6,N6,N6-trimethyllysine. 179–186 (GESGAGKT) contacts ATP. Tyr389 is subject to Phosphotyrosine. Phosphoserine is present on Ser392. Thr419 is subject to Phosphothreonine. Tyr424 is subject to Phosphotyrosine. Position 625 is a phosphoserine (Ser625). The tract at residues 659–681 (LNKLMTNLRSTHPHFVRCIIPNE) is actin-binding. His757 is modified (pros-methylhistidine). Residues 761-775 (KFGHTKVFFKAGLLG) form an actin-binding region. One can recognise an IQ domain in the interval 785–814 (LAQLITRTQARCRGFLARVEYQKMVERRES). Residues 843 to 1939 (LLKSAETEKE…EVHTKIISEE (1097 aa)) are a coiled coil. A phosphoserine mark is found at Ser1092 and Ser1096. 2 disordered regions span residues 1125 to 1147 (EIEA…SREL) and 1153 to 1172 (RLEE…KKRE). The segment covering 1128 to 1147 (AERASRAKAEKQRSDLSREL) has biased composition (basic and acidic residues). Phosphoserine occurs at positions 1162 and 1237. Position 1241 is a phosphothreonine (Thr1241). Ser1243 carries the phosphoserine modification. Thr1255 carries the phosphothreonine modification. Ser1261 bears the Phosphoserine mark. Phosphothreonine occurs at positions 1265 and 1286. 4 positions are modified to phosphoserine: Ser1288, Ser1292, Ser1303, and Ser1306. Tyr1464 carries the phosphotyrosine modification. Position 1467 is a phosphothreonine (Thr1467). A Phosphoserine modification is found at Ser1474. Tyr1492 is modified (phosphotyrosine). A Phosphoserine modification is found at Ser1495. At Thr1501 the chain carries Phosphothreonine. The residue at position 1514 (Ser1514) is a Phosphoserine. The residue at position 1517 (Thr1517) is a Phosphothreonine. Ser1554, Ser1574, Ser1600, Ser1603, Ser1714, and Ser1726 each carry phosphoserine. Thr1730 and Thr1736 each carry phosphothreonine. Residue Ser1739 is modified to Phosphoserine.

This sequence belongs to the TRAFAC class myosin-kinesin ATPase superfamily. Myosin family. As to quaternary structure, muscle myosin is a hexameric protein that consists of 2 heavy chain subunits (MHC), 2 alkali light chain subunits (MLC) and 2 regulatory light chain subunits (MLC-2). Interacts with SLC26A5.

It localises to the cytoplasm. The protein resides in the myofibril. Required for normal hearing. It plays a role in cochlear amplification of auditory stimuli, likely through the positive regulation of prestin (SLC26A5) activity and outer hair cell (OHC) electromotility. This is Myosin-1 (MYH1) from Canis lupus familiaris (Dog).